The following is a 280-amino-acid chain: Protoheme IX farnesyltransferase (280 aa).

9 helical membrane passes run 2–21 (VVATMLGGMWVASRYLRAGL), 30–50 (AAVPPAQLALALLGTVLVVSG), 83–103 (LALWFGIALSAASIPVLLVGV), 105–125 (ATTGVLAAAALLSYVLVYTPL), 131–151 (LSLPIGAIPGAIPPLLGWTSV), 160–180 (FLLFAVMFLWQIPHFLAISLF), 206–226 (IVGYLALLVLSSVLFVPLGVA), 229–249 (VYLGAAILLGGAFFGLGVYGL), and 260–280 (QVFFASMVYLVLLFAALMIGA).

Belongs to the UbiA prenyltransferase family. Protoheme IX farnesyltransferase subfamily.

The protein localises to the cell inner membrane. It carries out the reaction heme b + (2E,6E)-farnesyl diphosphate + H2O = Fe(II)-heme o + diphosphate. It functions in the pathway porphyrin-containing compound metabolism; heme O biosynthesis; heme O from protoheme: step 1/1. In terms of biological role, converts heme B (protoheme IX) to heme O by substitution of the vinyl group on carbon 2 of heme B porphyrin ring with a hydroxyethyl farnesyl side group. The polypeptide is Protoheme IX farnesyltransferase (Sorangium cellulosum (strain So ce56) (Polyangium cellulosum (strain So ce56))).